The sequence spans 499 residues: Lysine--tRNA ligase (499 aa).

Mg(2+) is bound by residues Glu-408 and Glu-415.

Belongs to the class-II aminoacyl-tRNA synthetase family. As to quaternary structure, homodimer. Requires Mg(2+) as cofactor.

The protein resides in the cytoplasm. It catalyses the reaction tRNA(Lys) + L-lysine + ATP = L-lysyl-tRNA(Lys) + AMP + diphosphate. This is Lysine--tRNA ligase from Bacillus cereus (strain AH820).